Here is a 174-residue protein sequence, read N- to C-terminus: B3 domain-containing protein At3g06220 (174 aa).

The TF-B3 DNA-binding region spans 8 to 101; it reads PRFYTVFLSC…SYEVSIYGRG (94 aa). The segment at 114-174 is disordered; it reads EISDESESDN…ISDASDSDYY (61 aa). 2 stretches are compositionally biased toward acidic residues: residues 139-150 and 164-174; these read ENSDDTEGDNDS and EISDASDSDYY.

It is found in the nucleus. The sequence is that of B3 domain-containing protein At3g06220 from Arabidopsis thaliana (Mouse-ear cress).